The following is a 501-amino-acid chain: Ribose import ATP-binding protein RbsA (501 aa).

2 consecutive ABC transporter domains span residues 5-241 (LQLK…VGRK) and 252-495 (APGE…VGKL). 37-44 (GENGAGKS) lines the ATP pocket.

This sequence belongs to the ABC transporter superfamily. Ribose importer (TC 3.A.1.2.1) family. In terms of assembly, the complex is composed of an ATP-binding protein (RbsA), two transmembrane proteins (RbsC) and a solute-binding protein (RbsB).

It is found in the cell inner membrane. The catalysed reaction is D-ribose(out) + ATP + H2O = D-ribose(in) + ADP + phosphate + H(+). Its function is as follows. Part of the ABC transporter complex RbsABC involved in ribose import. Responsible for energy coupling to the transport system. This chain is Ribose import ATP-binding protein RbsA, found in Salmonella paratyphi A (strain ATCC 9150 / SARB42).